The primary structure comprises 383 residues: 8-amino-7-oxononanoate synthase (383 aa).

Arg21 is a substrate binding site. 108–109 contributes to the pyridoxal 5'-phosphate binding site; the sequence is GF. His133 is a substrate binding site. The pyridoxal 5'-phosphate site is built by Ser179, His207, and Thr233. An N6-(pyridoxal phosphate)lysine modification is found at Lys236. Thr350 provides a ligand contact to substrate.

This sequence belongs to the class-II pyridoxal-phosphate-dependent aminotransferase family. BioF subfamily. Homodimer. Pyridoxal 5'-phosphate serves as cofactor.

The catalysed reaction is 6-carboxyhexanoyl-[ACP] + L-alanine + H(+) = (8S)-8-amino-7-oxononanoate + holo-[ACP] + CO2. The protein operates within cofactor biosynthesis; biotin biosynthesis. Catalyzes the decarboxylative condensation of pimeloyl-[acyl-carrier protein] and L-alanine to produce 8-amino-7-oxononanoate (AON), [acyl-carrier protein], and carbon dioxide. The chain is 8-amino-7-oxononanoate synthase from Yersinia enterocolitica serotype O:8 / biotype 1B (strain NCTC 13174 / 8081).